A 496-amino-acid chain; its full sequence is Fibronectin type III and SPRY domain-containing protein 1 (496 aa).

Positions 4–99 (QREALRKIIK…ALESSEELLE (96 aa)) form a coiled coil. Positions 105-162 (LQAMDSEDFPQAAKQIKDGVTMAPAFRLSLKAKVSDNMSHLMVDFAQERQMLQALKFL) constitute a COS domain. In terms of domain architecture, Fibronectin type-III spans 164-268 (VPSAPVIDLA…EPVTLETPAF (105 aa)). The B30.2/SPRY domain occupies 268-477 (FMFRLDASTS…VTTGLQVPSA (210 aa)). Residues 301 to 336 (KAREKDGKGRTASPINSPARGTPSPKRMPSGRGGRD) form a disordered region. Omega-N-methylarginine occurs at positions 310 and 320.

Oligomerization is required for binding to microtubules. In terms of tissue distribution, highly expressed in brain tissues, including cerebellum, cerebral cortex, medulla, occipital pole, frontal lobe, temporal lobe and putamen. Lower expression in spinal cord.

The protein localises to the cytoplasm. Its subcellular location is the cytoskeleton. It is found in the microtubule organizing center. The protein resides in the centrosome. It localises to the nucleus. The protein localises to the cleavage furrow. Functionally, may be involved in microtubule organization and stabilization. The chain is Fibronectin type III and SPRY domain-containing protein 1 (FSD1) from Homo sapiens (Human).